A 343-amino-acid polypeptide reads, in one-letter code: Arginine-hydroxylase NDUFAF5, mitochondrial (343 aa).

The N-terminal 29 residues, 1 to 29 (MLRRVVLSRLYARLGGPAVSAGRGGRRGV), are a transit peptide targeting the mitochondrion. The disordered stretch occupies residues 18–40 (AVSAGRGGRRGVASSVPPSGSTS).

It belongs to the methyltransferase superfamily. In terms of assembly, interacts with NDUFAF8, leading to stabilize NDUFAF5. Interacts with NDUFS7. Interacts with PYURF (via TRM112 domain); the interaction is direct and stabilizes NDUFAF5 protein.

The protein localises to the mitochondrion inner membrane. Functionally, arginine hydroxylase that mediates hydroxylation of 'Arg-111' of NDUFS7 and is involved in the assembly of mitochondrial NADH:ubiquinone oxidoreductase complex (complex I, MT-ND1) at early stages. May also have methyltransferase activity. This is Arginine-hydroxylase NDUFAF5, mitochondrial from Rattus norvegicus (Rat).